The primary structure comprises 460 residues: Hemopexin (460 aa).

Residues 1-23 (MARTVVALNILVLLGLCWSLAVA) form the signal peptide. N-linked (GlcNAc...) asparagine glycosylation is found at Asn-38 and Asn-64. 3 disulfides stabilise this stretch: Cys-50/Cys-230, Cys-148/Cys-153, and Cys-187/Cys-199. 4 Hemopexin repeats span residues 53-93 (AWSF…WKNP), 94-138 (VTSV…FPGI), 139-183 (PYPP…SWPA), and 184-230 (VGNC…FISC). His-79 is a binding site for heme. His-149 serves as a coordination point for heme. The N-linked (GlcNAc...) asparagine glycan is linked to Asn-186. Residue His-235 coordinates heme. N-linked (GlcNAc...) asparagine glycans are attached at residues Asn-240 and Asn-246. Disulfide bonds link Cys-255/Cys-458, Cys-364/Cys-406, and Cys-416/Cys-433. Hemopexin repeat units lie at residues 257-302 (ADPG…WPQG), 303-350 (PSAV…LGSP), 355-394 (LDTIDAAFSCPGSSKLYVTSGRRLWWLDLKSGAQATWAEL), and 398-448 (HEKV…SLPQ). His-291 is a heme binding site.

The protein belongs to the hemopexin family. Expressed by the liver and secreted in plasma.

The protein localises to the secreted. In terms of biological role, binds heme and transports it to the liver for breakdown and iron recovery, after which the free hemopexin returns to the circulation. This is Hemopexin (Hpx) from Rattus norvegicus (Rat).